The sequence spans 145 residues: MKVILIKDTKDGKANTIIDVSPGYATNFLFKNKLAEPLNARTEKLLVKRKQQIEIEKQEKQEQIAKLKIEIEKLVLWFKLKGNKESVHGAITAKKIKKELEIKGIFVDKQAIQTSGISTFGTSFVDIKLSSQTIAKLKINITKDE.

This sequence belongs to the bacterial ribosomal protein bL9 family.

In terms of biological role, binds to the 23S rRNA. The polypeptide is Large ribosomal subunit protein bL9 (Mesomycoplasma hyopneumoniae (strain J / ATCC 25934 / NCTC 10110) (Mycoplasma hyopneumoniae)).